Reading from the N-terminus, the 85-residue chain is High affinity immunoglobulin epsilon receptor subunit gamma (85 aa).

Positions 1-18 (MIPAVVLLLLLLVEQAAA) are cleaved as a signal peptide. Residues 19 to 23 (LGEPQ) lie on the Extracellular side of the membrane. Residues 24-44 (LCYILDAILFLYGIVLTLLYC) form a helical membrane-spanning segment. Residues 45-85 (RLKLQVRKAATASEKSDGIYTGLSTRTQETYETLKHEKPPQ) are Cytoplasmic-facing. Residues 53-81 (AATASEKSDGIYTGLSTRTQETYETLKHE) enclose the ITAM domain. Tyrosine 64 bears the Phosphotyrosine mark. Serine 68 is subject to Phosphoserine. Phosphotyrosine is present on tyrosine 75. Position 77 is a phosphothreonine (threonine 77).

This sequence belongs to the CD3Z/FCER1G family. IgE Fc receptor is a tetramer of an alpha chain, a beta chain, and two disulfide linked gamma chains. Associates with FCGR1A; forms a functional signaling complex. The signaling subunit of immunoglobulin gamma (IgG) Fc receptor complex. As a homodimer or a heterodimer of CD247 and FCER1G, associates with the ligand binding subunit FCGR3A to form a functional receptor complex. Associates with CLEC6A. Interacts with CLEC4E. Interacts (via ITAM domain) with SYK (via SH2 domains); activates SYK, enabling integrin-mediated activation of neutrophils and macrophages. Interacts with CSF2RB and recruits SYK in response to IL3 stimulation; this interaction is direct. Interacts with CD300LH; the interaction may be indirect. Interacts with CD300LD. Interacts with TARM1.

It is found in the cell membrane. Functionally, adapter protein containing an immunoreceptor tyrosine-based activation motif (ITAM) that transduces activation signals from various immunoreceptors. As a component of the high-affinity immunoglobulin E (IgE) receptor, mediates allergic inflammatory signaling in mast cells. As a constitutive component of interleukin-3 receptor complex, selectively mediates interleukin 4/IL4 production by basophils priming T-cells toward effector T-helper 2 subset. Associates with pattern recognition receptors CLEC4D and CLEC4E to form a functional signaling complex in myeloid cells. Binding of mycobacterial trehalose 6,6'-dimycolate (TDM) to this receptor complex leads to phosphorylation of ITAM, triggering activation of SYK, CARD9 and NF-kappa-B, consequently driving maturation of antigen-presenting cells and shaping antigen-specific priming of T-cells toward effector T-helper 1 and T-helper 17 cell subtypes. May function cooperatively with other activating receptors. Functionally linked to integrin beta-2/ITGB2-mediated neutrophil activation. Also involved in integrin alpha-2/ITGA2-mediated platelet activation. The sequence is that of High affinity immunoglobulin epsilon receptor subunit gamma (FCER1G) from Bos taurus (Bovine).